Reading from the N-terminus, the 313-residue chain is DNA-directed RNA polymerase subunit alpha (313 aa).

The segment at 1-226 (MLEIEKPKIE…EHMRLFLGLT (226 aa)) is alpha N-terminal domain (alpha-NTD). The interval 242-313 (TRDRLMDMSI…LGLSLRSSEE (72 aa)) is alpha C-terminal domain (alpha-CTD).

Belongs to the RNA polymerase alpha chain family. In terms of assembly, homodimer. The RNAP catalytic core consists of 2 alpha, 1 beta, 1 beta' and 1 omega subunit. When a sigma factor is associated with the core the holoenzyme is formed, which can initiate transcription.

The enzyme catalyses RNA(n) + a ribonucleoside 5'-triphosphate = RNA(n+1) + diphosphate. Functionally, DNA-dependent RNA polymerase catalyzes the transcription of DNA into RNA using the four ribonucleoside triphosphates as substrates. This Moorella thermoacetica (strain ATCC 39073 / JCM 9320) protein is DNA-directed RNA polymerase subunit alpha.